Reading from the N-terminus, the 889-residue chain is MEFPHSVLLVVLIIATFAISNLVQAEEDQEGFISLDCGLPPNEVSPYIEPFTGLRFSSDSSFIQSGKIGKVDKSFEATTLKSYMTLRYFPDGKRNCYNLIVKQGKTYMIRATALYGNYDGLNISPKFDLYIGANFWTTLDAGEYLSGVVEEVNYIPRSNSLDVCLVKTDTSTPFLSLLELRPLDNDSYLTGSGSLKTFRRYYLSNSESVIAYPEDVKDRIWEPTFDSEWKQIWTTLKPNNSNGYLVPKNVLMTAAIPANDSAPFRFTEELDSPTDELYVYLHFSEVQSLQANESREFDILWSGEVAYEAFIPEYLNITTIQTNTPVTCPGGKCNLELKRTKNSTHPPLINAIEFYTVVNFPQLETNETDVVAIKDIKATYELNRITWQGDPCVPQKFIWEGLDCNSKDALTLPRITSLNLSSTGLTGNIAAGIQNLTHLDKLDLSNNNLTGGVPEFLASMKSLSFINLSKNNLNGSIPQALLKREKDGLKLSVDEQIRCFPGSCVITKKKFPVMIVALVSSAVVVILVVLVLIFVFKKKKPSNLEDLPPSSNTPRENITSTSISDTSIETKRKRFSYSEVMEMTKNLQRPLGEGGFGVVYHGDINGSSQQVAVKLLSQSSTQGYKEFKAEVELLLRVHHINLVSLVGYCDERDHLALIYEYMSNKDLKHHLSGKHGGSVLKWNTRLQIAVDAALGLEYLHIGCRPSMVHRDVKSTNILLDDQFTAKMADFGLSRSFQLGDESQVSTVVAGTPGYLDPEYYRTGRLAEMSDVYSFGIVLLEIITNQRVIDPAREKSHITEWTAFMLNRGDITRIMDPNLQGDYNSRSVWRALELAMMCANPSSEKRPSMSQVVIELKECIRSENKTQGMDSHSSFEQSMSFDTKAVPSAR.

The signal sequence occupies residues 1–25 (MEFPHSVLLVVLIIATFAISNLVQA). The Extracellular portion of the chain corresponds to 26-514 (EEDQEGFISL…VITKKKFPVM (489 aa)). N-linked (GlcNAc...) asparagine glycans are attached at residues asparagine 185, asparagine 239, asparagine 259, asparagine 292, asparagine 316, asparagine 342, asparagine 366, asparagine 419, asparagine 435, asparagine 448, asparagine 467, and asparagine 474. LRR repeat units lie at residues 414-437 (RITS…QNLT), 438-460 (HLDK…LASM), and 462-483 (SLSF…ALLK). Residues 515–535 (IVALVSSAVVVILVVLVLIFV) traverse the membrane as a helical segment. Topologically, residues 536 to 889 (FKKKKPSNLE…FDTKAVPSAR (354 aa)) are cytoplasmic. The tract at residues 544–566 (LEDLPPSSNTPRENITSTSISDT) is disordered. Residues 585 to 874 (KNLQRPLGEG…TQGMDSHSSF (290 aa)) enclose the Protein kinase domain. ATP-binding positions include 591–599 (LGEGGFGVV) and lysine 614. Tyrosine 659 carries the post-translational modification Phosphotyrosine. Aspartate 711 functions as the Proton acceptor in the catalytic mechanism. Serine 745 is subject to Phosphoserine. Phosphothreonine is present on residues threonine 746 and threonine 751. At tyrosine 759 the chain carries Phosphotyrosine. A disordered region spans residues 863-889 (NKTQGMDSHSSFEQSMSFDTKAVPSAR). Positions 864 to 880 (KTQGMDSHSSFEQSMSF) are enriched in polar residues.

It belongs to the protein kinase superfamily. Ser/Thr protein kinase family.

The protein localises to the cell membrane. The enzyme catalyses L-seryl-[protein] + ATP = O-phospho-L-seryl-[protein] + ADP + H(+). It catalyses the reaction L-threonyl-[protein] + ATP = O-phospho-L-threonyl-[protein] + ADP + H(+). The sequence is that of Putative receptor-like protein kinase At3g46340 from Arabidopsis thaliana (Mouse-ear cress).